The chain runs to 301 residues: 2-dehydropantoate 2-reductase (301 aa).

NADP(+) is bound by residues 7 to 12, Lys74, Asn99, and Ala123; that span reads GAGAIG. Catalysis depends on Lys179, which acts as the Proton donor. Substrate is bound by residues Lys179, Asn183, Asn187, Asn197, and 246-249; that span reads NYNS. Residue Glu261 coordinates NADP(+).

This sequence belongs to the ketopantoate reductase family.

Its subcellular location is the cytoplasm. It catalyses the reaction (R)-pantoate + NAD(+) = 2-dehydropantoate + NADH + H(+). It carries out the reaction (R)-pantoate + NADP(+) = 2-dehydropantoate + NADPH + H(+). It participates in cofactor biosynthesis; coenzyme A biosynthesis. Catalyzes the NAD(P)H-dependent reduction of ketopantoate into pantoic acid. This Pyrococcus horikoshii (strain ATCC 700860 / DSM 12428 / JCM 9974 / NBRC 100139 / OT-3) protein is 2-dehydropantoate 2-reductase.